Consider the following 655-residue polypeptide: A-type voltage-gated potassium channel KCND3 (655 aa).

At 1–182 (MAAGVAAWLP…FENPHTSTLA (182 aa)) the chain is on the cytoplasmic side. The interaction with KCNIP1 and KCNIP2 stretch occupies residues 6 to 21 (AAWLPFARAAAIGWMP). Residues 70–78 (EKEFFFNED) are interaction with KCNIP1. 4 residues coordinate Zn(2+): His-104, Cys-110, Cys-131, and Cys-132. Ser-153 is modified (phosphoserine). A helical membrane pass occupies residues 183–204 (LVFYYVTGFFIAVSVITNVVET). Residues 205 to 223 (VPCGTVPGSKELPCGERYS) are Extracellular-facing. The chain crosses the membrane as a helical span at residues 224 to 246 (VAFFCLDTACVMIFTVEYLLRLF). The Cytoplasmic segment spans residues 247 to 253 (AAPSRYR). A helical membrane pass occupies residues 254-277 (FIRSVMSIIDVVAIMPYYIGLVMT). Over 278 to 283 (NNEDVS) the chain is Extracellular. The helical; Voltage-sensor transmembrane segment at 284 to 306 (GAFVTLRVFRVFRIFKFSRHSQG) threads the bilayer. Topologically, residues 307 to 318 (LRILGYTLKSCA) are cytoplasmic. The chain crosses the membrane as a helical span at residues 319–343 (SELGFLLFSLTMAIIIFATVMFYAE). Topologically, residues 344 to 352 (KGSSASKFT) are extracellular. An intramembrane region (helical) is located at residues 353–366 (SIPASFWYTIVTMT). Positions 367, 368, 369, and 370 each coordinate K(+). A Selectivity filter motif is present at residues 367 to 372 (TLGYGD). An intramembrane segment occupies 367 to 374 (TLGYGDMV). The chain crosses the membrane as a helical span at residues 378-400 (IAGKIFGSICSLSGVLVIALPVP). Topologically, residues 401–655 (VIVSNFSRIY…ASNVVKVSAL (255 aa)) are cytoplasmic. The residue at position 459 (Thr-459) is a Phosphothreonine. The interval 470 to 487 (SLIESQHHHLLHCLEKTT) is interaction with KCNIP1 and KCNIP2. Residues 472-487 (IESQHHHLLHCLEKTT) are mediates dendritic targeting. A compositionally biased stretch (polar residues) spans 525-548 (MQNYPSTRSPSLSSHPGLTTTCCS). A disordered region spans residues 525–565 (MQNYPSTRSPSLSSHPGLTTTCCSRRSKKTTHLPNSNLPAT). Ser-569 carries the phosphoserine; by CaMK2D modification. A Phosphoserine modification is found at Ser-585. Residues 615–655 (ISIPTPPALTPEGESRPPPASPGPNTNIPSIASNVVKVSAL) are disordered. Over residues 637 to 647 (GPNTNIPSIAS) the composition is skewed to polar residues.

The protein belongs to the potassium channel family. D (Shal) (TC 1.A.1.2) subfamily. Kv4.3/KCND3 sub-subfamily. Homotetramer. Heterotetramer with KCND2. Associates with the regulatory subunits KCNIP3 and KCNIP4. Interacts with KCNE1, KCNE2, SCN1B and KCNAB1 and DLG1. Component of heteromultimeric potassium channels. Identified in potassium channel complexes containing KCND1, KCND2, KCND3, KCNIP1, KCNIP2, KCNIP3, KCNIP4, DPP6 and DPP10. Interacts with KCNIP1; each KCNIP1 monomer interacts with two adjacent KCND3 subunits, through both the N-terminal inactivation ball of a KCND3 subunit and a C-terminal helix from the adjacent KCND3 subunit, clamping them together; this interaction stabilizes the tetrameric form and modulates the channel gating kinetics namely channel activation and inactivation kinetics and rate of recovery from inactivation. Interacts with DPP6; this interaction modulates the channel gating kinetics namely channel activation and inactivation kinetics and rate of recovery from inactivation. Interacts with KCNIP2; each KCNIP2 monomer interacts with two adjacent KCND3 subunits, through both the N-terminal inactivation ball of a KCND3 subunit and a C-terminal helix from the adjacent KCND3 subunit, clamping them together; this interaction modulates the channel gating kinetics. Regulated through phosphorylation at Ser-569 by CaMK2D. In terms of tissue distribution, highly expressed in heart and brain, in particular in cortex, cerebellum, amygdala and caudate nucleus. Detected at lower levels in liver, skeletal muscle, kidney and pancreas.

The protein localises to the cell membrane. It localises to the sarcolemma. Its subcellular location is the cell projection. The protein resides in the dendrite. The catalysed reaction is K(+)(in) = K(+)(out). Pore-forming (alpha) subunit of voltage-gated A-type potassium channels that mediates transmembrane potassium transport in excitable membranes, in brain and heart. In cardiomyocytes, may generate the transient outward potassium current I(To). In neurons, may conduct the transient subthreshold somatodendritic A-type potassium current (ISA). Kinetics properties are characterized by fast activation at subthreshold membrane potentials, rapid inactivation, and quick recovery from inactivation. Channel properties are modulated by interactions with regulatory subunits. Interaction with the regulatory subunits KCNIP1 or KCNIP2 modulates the channel gating kinetics namely channel activation and inactivation kinetics and rate of recovery from inactivation. Likewise, interaction with DPP6 modulates the channel gating kinetics namely channel activation and inactivation kinetics. This Homo sapiens (Human) protein is A-type voltage-gated potassium channel KCND3 (KCND3).